Here is a 457-residue protein sequence, read N- to C-terminus: Argininosuccinate lyase (457 aa).

The protein belongs to the lyase 1 family. Argininosuccinate lyase subfamily.

Its subcellular location is the cytoplasm. It carries out the reaction 2-(N(omega)-L-arginino)succinate = fumarate + L-arginine. The protein operates within amino-acid biosynthesis; L-arginine biosynthesis; L-arginine from L-ornithine and carbamoyl phosphate: step 3/3. In Yersinia pseudotuberculosis serotype O:3 (strain YPIII), this protein is Argininosuccinate lyase.